The primary structure comprises 102 residues: Nucleoid-associated protein BCc_301 (102 aa).

The protein belongs to the YbaB/EbfC family. As to quaternary structure, homodimer.

The protein resides in the cytoplasm. Its subcellular location is the nucleoid. In terms of biological role, binds to DNA and alters its conformation. May be involved in regulation of gene expression, nucleoid organization and DNA protection. In Buchnera aphidicola subsp. Cinara cedri (strain Cc), this protein is Nucleoid-associated protein BCc_301.